A 269-amino-acid polypeptide reads, in one-letter code: 2-dehydro-3-deoxyphosphooctonate aldolase (269 aa).

It belongs to the KdsA family.

It is found in the cytoplasm. It catalyses the reaction D-arabinose 5-phosphate + phosphoenolpyruvate + H2O = 3-deoxy-alpha-D-manno-2-octulosonate-8-phosphate + phosphate. It participates in carbohydrate biosynthesis; 3-deoxy-D-manno-octulosonate biosynthesis; 3-deoxy-D-manno-octulosonate from D-ribulose 5-phosphate: step 2/3. It functions in the pathway bacterial outer membrane biogenesis; lipopolysaccharide biosynthesis. The polypeptide is 2-dehydro-3-deoxyphosphooctonate aldolase (Chlamydia trachomatis serovar A (strain ATCC VR-571B / DSM 19440 / HAR-13)).